The primary structure comprises 990 residues: Bifunctional glutamine synthetase adenylyltransferase/adenylyl-removing enzyme (990 aa).

The adenylyl removase stretch occupies residues 1 to 474 (MIFSAITADL…HYAKLFEGDP (474 aa)). The interval 478-990 (AKLPPVDYGA…FSRLIGGEDA (513 aa)) is adenylyl transferase.

Belongs to the GlnE family. Requires Mg(2+) as cofactor.

The enzyme catalyses [glutamine synthetase]-O(4)-(5'-adenylyl)-L-tyrosine + phosphate = [glutamine synthetase]-L-tyrosine + ADP. It carries out the reaction [glutamine synthetase]-L-tyrosine + ATP = [glutamine synthetase]-O(4)-(5'-adenylyl)-L-tyrosine + diphosphate. Functionally, involved in the regulation of glutamine synthetase GlnA, a key enzyme in the process to assimilate ammonia. When cellular nitrogen levels are high, the C-terminal adenylyl transferase (AT) inactivates GlnA by covalent transfer of an adenylyl group from ATP to specific tyrosine residue of GlnA, thus reducing its activity. Conversely, when nitrogen levels are low, the N-terminal adenylyl removase (AR) activates GlnA by removing the adenylyl group by phosphorolysis, increasing its activity. The regulatory region of GlnE binds the signal transduction protein PII (GlnB) which indicates the nitrogen status of the cell. This is Bifunctional glutamine synthetase adenylyltransferase/adenylyl-removing enzyme from Rhodopseudomonas palustris (strain ATCC BAA-98 / CGA009).